The primary structure comprises 385 residues: Glycerol-3-phosphate dehydrogenase [NAD(+)] 1 (385 aa).

NAD(+) contacts are provided by residues 29 to 34 (GSGNWG), Phe-121, Lys-144, and Ala-177. Residue Lys-144 coordinates substrate. Residue Lys-232 is the Proton acceptor of the active site. Arg-296 and Gln-325 together coordinate NAD(+). Substrate is bound at residue 296-297 (RN). At Ser-376 the chain carries Phosphoserine. A Phosphothreonine modification is found at Thr-382.

This sequence belongs to the NAD-dependent glycerol-3-phosphate dehydrogenase family.

It is found in the cytoplasm. The enzyme catalyses sn-glycerol 3-phosphate + NAD(+) = dihydroxyacetone phosphate + NADH + H(+). In Schizosaccharomyces pombe (strain 972 / ATCC 24843) (Fission yeast), this protein is Glycerol-3-phosphate dehydrogenase [NAD(+)] 1 (gpd1).